Here is a 231-residue protein sequence, read N- to C-terminus: 7-cyano-7-deazaguanine synthase (231 aa).

7–17 is an ATP binding site; it reads LSSGLDSVAAL. C195, C203, C206, and C209 together coordinate Zn(2+).

Belongs to the QueC family. Zn(2+) serves as cofactor.

It carries out the reaction 7-carboxy-7-deazaguanine + NH4(+) + ATP = 7-cyano-7-deazaguanine + ADP + phosphate + H2O + H(+). It functions in the pathway purine metabolism; 7-cyano-7-deazaguanine biosynthesis. Its function is as follows. Catalyzes the ATP-dependent conversion of 7-carboxy-7-deazaguanine (CDG) to 7-cyano-7-deazaguanine (preQ(0)). The sequence is that of 7-cyano-7-deazaguanine synthase from Methanosarcina mazei (strain ATCC BAA-159 / DSM 3647 / Goe1 / Go1 / JCM 11833 / OCM 88) (Methanosarcina frisia).